The primary structure comprises 538 residues: Phospho-2-dehydro-3-deoxyheptonate aldolase 1, chloroplastic (538 aa).

Residues 1–74 (MALSSTSTTN…KPSKSSPPAA (74 aa)) constitute a chloroplast transit peptide. Positions 55 to 82 (DSNKIPIVSDKPSKSSPPAATATTAPAP) are disordered. Positions 68–82 (KSSPPAATATTAPAP) are enriched in low complexity. Thr75 carries the post-translational modification Blocked amino end (Thr).

The protein belongs to the class-II DAHP synthase family.

It localises to the plastid. The protein localises to the chloroplast. It carries out the reaction D-erythrose 4-phosphate + phosphoenolpyruvate + H2O = 7-phospho-2-dehydro-3-deoxy-D-arabino-heptonate + phosphate. It functions in the pathway metabolic intermediate biosynthesis; chorismate biosynthesis; chorismate from D-erythrose 4-phosphate and phosphoenolpyruvate: step 1/7. Its activity is regulated as follows. Activation by tryptophan (a hysteretic factor). The protein is Phospho-2-dehydro-3-deoxyheptonate aldolase 1, chloroplastic (SHKA) of Solanum tuberosum (Potato).